The following is a 158-amino-acid chain: NADPH-dependent 7-cyano-7-deazaguanine reductase (158 aa).

Polar residues predominate over residues 1–13 (MAKRSNTTMTSAG). The interval 1 to 37 (MAKRSNTTMTSAGLQLGREVAPPDSPETAKLDRVPNP) is disordered. The span at 27–37 (ETAKLDRVPNP) shows a compositional bias: basic and acidic residues. Cys56 functions as the Thioimide intermediate in the catalytic mechanism. The Proton donor role is filled by Asp63. Substrate-binding positions include 78-80 (VES) and 97-98 (HE).

The protein belongs to the GTP cyclohydrolase I family. QueF type 1 subfamily.

The protein resides in the cytoplasm. It carries out the reaction 7-aminomethyl-7-carbaguanine + 2 NADP(+) = 7-cyano-7-deazaguanine + 2 NADPH + 3 H(+). It participates in tRNA modification; tRNA-queuosine biosynthesis. Catalyzes the NADPH-dependent reduction of 7-cyano-7-deazaguanine (preQ0) to 7-aminomethyl-7-deazaguanine (preQ1). In Bradyrhizobium sp. (strain ORS 278), this protein is NADPH-dependent 7-cyano-7-deazaguanine reductase.